We begin with the raw amino-acid sequence, 215 residues long: MNGDKKQVTDIVETLKKGPLDPNVEVVIGVPAIYLAYVQSIVPGTISVAAQNCWKVAKGAFTGEISPAMIKDIGANWVILGHSERRTIFGEKDDLVAEKVAHALENGLKVIACIGETLEEREAGKTEEVVFRQTKALLPAIGNNWANVVLAYEPVWAIGTGKTASPQQAQDVHASLRNWLSSNASPDVAASVRIQYGGSVTAANAKELSAFPDID.

The active-site Electrophile is the His82. Glu153 (proton acceptor) is an active-site residue.

It belongs to the triosephosphate isomerase family. In terms of assembly, homodimer.

The catalysed reaction is D-glyceraldehyde 3-phosphate = dihydroxyacetone phosphate. It participates in carbohydrate biosynthesis; gluconeogenesis. Its pathway is carbohydrate degradation; glycolysis; D-glyceraldehyde 3-phosphate from glycerone phosphate: step 1/1. This chain is Triosephosphate isomerase (Tpi), found in Heliothis virescens (Tobacco budworm moth).